A 442-amino-acid polypeptide reads, in one-letter code: UBX domain-containing protein 6 (442 aa).

Residues 1-10 form a mediates interaction with LMAN1 region; that stretch reads MKKFFQEIKA. Residues 13–111 are disordered; the sequence is KFKSAGPGQK…TNSVPEPKEE (99 aa). At S36 the chain carries Phosphoserine. The tract at residues 51 to 63 is VCP/p97-interacting motif (VIM); the sequence is EAQMAAAAALARL. Residues 52-61 are compositionally biased toward low complexity; the sequence is AQMAAAAALA. A compositionally biased stretch (polar residues) spans 90–105; the sequence is EATSSNNPGAPGTNSV. The PUB domain occupies 175–244; sequence VDTIAKYLDN…GQEEFYVLGE (70 aa). Residues 332–408 enclose the UBX domain; sequence RKYTYALVRV…GLVPSALLTF (77 aa).

In terms of assembly, interacts with VCP through the PUB domain (via C-terminus) and VIM motif (via N-terminus); the interaction is direct. Forms a ternary complex with CAV1 and VCP. Interacts with SYVN1. Interacts with HERPUD1. Interacts with VCPKMT. May interact with DERL1. Interacts with PLAA, VCP and YOD1; may form a complex involved in macroautophagy. Interacts with LMAN1. Widely expressed (at protein level). Highest expression in brain (at protein level).

It localises to the cytoplasm. It is found in the cytosol. Its subcellular location is the membrane. The protein resides in the nucleus. The protein localises to the cytoskeleton. It localises to the microtubule organizing center. It is found in the centrosome. Its subcellular location is the early endosome membrane. The protein resides in the late endosome membrane. The protein localises to the lysosome membrane. Functionally, may negatively regulate the ATPase activity of VCP, an ATP-driven segregase that associates with different cofactors to control a wide variety of cellular processes. As a cofactor of VCP, it may play a role in the transport of CAV1 to lysosomes for degradation. It may also play a role in endoplasmic reticulum-associated degradation (ERAD) of misfolded proteins. Together with VCP and other cofactors, it may play a role in macroautophagy, regulating for instance the clearance of damaged lysosomes. In Mus musculus (Mouse), this protein is UBX domain-containing protein 6.